The chain runs to 402 residues: MNGEKPLRERKKKMPYPSPVTEEPISIMSLPYDLLLNCFSLVSRLYYPTLSLVSKTFRSIITSRELYEIRSRLNRTDKCLYLCFPYDMNTHWFTLCREPNRNVAENSSGYLLVQVPSPNGLLPVHSSSVIAVGSNIYKIGGTKSYRHKLWKRTRYSSSVSVLDCRSHRWRQAPGMRVARGCSSTVCEVDGKIYIAGGCKEDIGSLYWIEVFDPKTQTWGTLKNPCIEYQHDIGYRCEVKSLGLDGKIYMFGSEFVVYNFEEDRWKCIGRDKYNLYHAVDPMSRINSSSCVVDNVLFILDKGTRVFKWYDFKVSLWKELNGVEGLPDLSDRGYVKMVDLGGKIAVLWQECLTNKKIKRIWCAEISLERRDRDEIWGKVEWFDIVLSVHSSFSLLCADTISVVV.

One can recognise an F-box domain in the interval 24-70 (PISIMSLPYDLLLNCFSLVSRLYYPTLSLVSKTFRSIITSRELYEIR). 3 Kelch repeats span residues 135-189 (NIYK…CEVD), 191-240 (KIYI…EVKS), and 246-293 (KIYM…VVDN).

The chain is Putative F-box/kelch-repeat protein At1g61540 from Arabidopsis thaliana (Mouse-ear cress).